The primary structure comprises 479 residues: D-aminoacyl-tRNA deacylase (479 aa).

The protein belongs to the DtdA deacylase family. Monomer. Requires Zn(2+) as cofactor.

The enzyme catalyses a D-aminoacyl-tRNA + H2O = a tRNA + a D-alpha-amino acid + H(+). The catalysed reaction is glycyl-tRNA(Ala) + H2O = tRNA(Ala) + glycine + H(+). D-aminoacyl-tRNA deacylase with broad substrate specificity. By recycling D-aminoacyl-tRNA to D-amino acids and free tRNA molecules, this enzyme counteracts the toxicity associated with the formation of D-aminoacyl-tRNA entities in vivo. This chain is D-aminoacyl-tRNA deacylase, found in Methanococcoides burtonii (strain DSM 6242 / NBRC 107633 / OCM 468 / ACE-M).